The chain runs to 110 residues: Integration host factor subunit alpha (110 aa).

The protein belongs to the bacterial histone-like protein family. Heterodimer of an alpha and a beta chain.

Functionally, this protein is one of the two subunits of integration host factor, a specific DNA-binding protein that functions in genetic recombination as well as in transcriptional and translational control. This is Integration host factor subunit alpha from Methylococcus capsulatus (strain ATCC 33009 / NCIMB 11132 / Bath).